The sequence spans 343 residues: 3-hydroxy-3-methylglutaryl-CoA lyase, cytoplasmic (343 aa).

The N-myristoyl glycine moiety is linked to residue Gly2. In terms of domain architecture, Pyruvate carboxyltransferase spans 48 to 315; that stretch reads VKIVEVGPRD…NTGVDLYKVM (268 aa). Position 56 (Arg56) interacts with substrate. A divalent metal cation is bound by residues Asp57, His248, and His250. The active site involves Cys281. An a divalent metal cation-binding site is contributed by Asn290.

It belongs to the HMG-CoA lyase family. A divalent metal cation is required as a cofactor.

The protein localises to the cytoplasm. It is found in the cytosol. The protein resides in the endoplasmic reticulum membrane. The enzyme catalyses (3S)-3-hydroxy-3-methylglutaryl-CoA = acetoacetate + acetyl-CoA. Its pathway is metabolic intermediate metabolism; (S)-3-hydroxy-3-methylglutaryl-CoA degradation; acetoacetate from (S)-3-hydroxy-3-methylglutaryl-CoA: step 1/1. In terms of biological role, non-mitochondrial 3-hydroxy-3-methylglutaryl-CoA lyase that catalyzes a cation-dependent cleavage of (S)-3-hydroxy-3-methylglutaryl-CoA into acetyl-CoA and acetoacetate, a key step in ketogenesis, the products of which support energy production in nonhepatic animal tissues. In Mus musculus (Mouse), this protein is 3-hydroxy-3-methylglutaryl-CoA lyase, cytoplasmic (Hmgcll1).